The chain runs to 402 residues: Arginine deiminase (402 aa).

Cys392 serves as the catalytic Amidino-cysteine intermediate.

The protein belongs to the arginine deiminase family.

The protein resides in the cytoplasm. It carries out the reaction L-arginine + H2O = L-citrulline + NH4(+). The protein operates within amino-acid degradation; L-arginine degradation via ADI pathway; carbamoyl phosphate from L-arginine: step 1/2. In Mycobacterium bovis (strain ATCC BAA-935 / AF2122/97), this protein is Arginine deiminase (arcA).